Reading from the N-terminus, the 217-residue chain is Peroxiredoxin Q, chloroplastic (217 aa).

Residues Met1–Val66 constitute a chloroplast transit peptide. Residues Val70–Leu217 enclose the Thioredoxin domain. Catalysis depends on Cys112, which acts as the Cysteine sulfenic acid (-SOH) intermediate. A disulfide bridge links Cys112 with Cys117.

This sequence belongs to the peroxiredoxin family. BCP/PrxQ subfamily. In terms of assembly, monomer.

The protein localises to the plastid. Its subcellular location is the chloroplast thylakoid lumen. It carries out the reaction a hydroperoxide + [thioredoxin]-dithiol = an alcohol + [thioredoxin]-disulfide + H2O. Its function is as follows. Thiol-specific peroxidase that catalyzes the reduction of hydrogen peroxide and organic hydroperoxides to water and alcohols, respectively. Plays a role in cell protection against oxidative stress by detoxifying peroxides. The chain is Peroxiredoxin Q, chloroplastic (PRX1) from Triticum aestivum (Wheat).